Consider the following 25-residue polypeptide: Gamma-conotoxin PiVIIA (25 aa).

Cystine bridges form between cysteine 1-cysteine 15, cysteine 8-cysteine 19, and cysteine 14-cysteine 24. A 4-hydroxyproline modification is found at proline 4. Residues glutamate 13 and glutamate 20 each carry the 4-carboxyglutamate modification.

The protein belongs to the conotoxin O2 superfamily. Expressed by the venom duct.

It localises to the secreted. In terms of biological role, micromolar concentrations of PiVIIA increase the magnitude of the macroscopic calcium current in DRG neurons from rat. An increase, even modest of the calcium current, may have a significant impact in the excitability and electrical activity of neurons, and may set up PiVIIA as a member of the pharmacological family of the gamma-conotoxins. The sequence is that of Gamma-conotoxin PiVIIA from Conus princeps (Prince cone).